A 465-amino-acid chain; its full sequence is Argininosuccinate lyase (465 aa).

Belongs to the lyase 1 family. Argininosuccinate lyase subfamily.

The protein resides in the cytoplasm. It carries out the reaction 2-(N(omega)-L-arginino)succinate = fumarate + L-arginine. It functions in the pathway amino-acid biosynthesis; L-arginine biosynthesis; L-arginine from L-ornithine and carbamoyl phosphate: step 3/3. The protein is Argininosuccinate lyase of Bradyrhizobium diazoefficiens (strain JCM 10833 / BCRC 13528 / IAM 13628 / NBRC 14792 / USDA 110).